Here is a 515-residue protein sequence, read N- to C-terminus: Meiotically up-regulated gene 68 protein (515 aa).

Residues 165–204 form a disordered region; sequence LHSIESERNESSLSLDSGESEKKSEEDNGNGEQNYIPEQY.

In terms of biological role, has a role in meiosis. In Schizosaccharomyces pombe (strain 972 / ATCC 24843) (Fission yeast), this protein is Meiotically up-regulated gene 68 protein (mug68).